Here is a 251-residue protein sequence, read N- to C-terminus: tRNA (guanine-N(1)-)-methyltransferase (251 aa).

Residues Gly-113 and 133–138 (IGDYVL) each bind S-adenosyl-L-methionine.

The protein belongs to the RNA methyltransferase TrmD family. As to quaternary structure, homodimer.

It localises to the cytoplasm. The catalysed reaction is guanosine(37) in tRNA + S-adenosyl-L-methionine = N(1)-methylguanosine(37) in tRNA + S-adenosyl-L-homocysteine + H(+). Its function is as follows. Specifically methylates guanosine-37 in various tRNAs. The polypeptide is tRNA (guanine-N(1)-)-methyltransferase (Methylococcus capsulatus (strain ATCC 33009 / NCIMB 11132 / Bath)).